The sequence spans 129 residues: 3-oxo-4,17-pregnadiene-20-carboxyl-CoA hydratase beta subunit (129 aa).

The protein belongs to the thioester dehydratase family. In terms of assembly, heterodimer composed of ChsH1 and ChsH2. Two heterodimers combine to form a heterotetramer. The complex interacts with Ltp2 via the DUF35 C-terminal region of ChsH2. The ChsH1-ChsH2-Ltp2 protein complex is composed of two protomers that form a heterohexameric structure through the Ltp2 dimerization interface.

It carries out the reaction 3-oxochola-4,17-dien-22-oyl-CoA + H2O = 17-hydroxy-3-oxochol-4-en-22-oyl-CoA. The catalysed reaction is (2E)-octenoyl-CoA + H2O = 3-hydroxyoctanoyl-CoA. The enzyme catalyses (2E)-decenoyl-CoA + H2O = 3-hydroxydecanoyl-CoA. Its pathway is steroid metabolism; cholesterol degradation. In the absence of the Ltp2 aldolase, ChsH1/ChsH2 can hydrate only about 30% of the 3-OPDC-CoA substrate. Complete turnover requires the presence of Ltp2. In terms of biological role, involved in cholesterol side chain degradation. Catalyzes the hydration of 3-oxo-4,17-pregnadiene-20-carboxyl-CoA (3-OPDC-CoA) to form 17-hydroxy-3-oxo-4-pregnene-20-carboxyl-CoA (17-HOPC-CoA), in the modified beta-oxidation pathway for cholesterol side chain degradation. Can also use octenoyl-CoA and decenoyl-CoA, with lower efficiency. The polypeptide is 3-oxo-4,17-pregnadiene-20-carboxyl-CoA hydratase beta subunit (Mycobacterium tuberculosis (strain ATCC 25618 / H37Rv)).